The chain runs to 125 residues: Phosphoribosyl-AMP cyclohydrolase (125 aa).

Residue D74 coordinates Mg(2+). C75 is a Zn(2+) binding site. Positions 76 and 78 each coordinate Mg(2+). C92 and C99 together coordinate Zn(2+).

The protein belongs to the PRA-CH family. As to quaternary structure, homodimer. Requires Mg(2+) as cofactor. The cofactor is Zn(2+).

The protein resides in the cytoplasm. The catalysed reaction is 1-(5-phospho-beta-D-ribosyl)-5'-AMP + H2O = 1-(5-phospho-beta-D-ribosyl)-5-[(5-phospho-beta-D-ribosylamino)methylideneamino]imidazole-4-carboxamide. The protein operates within amino-acid biosynthesis; L-histidine biosynthesis; L-histidine from 5-phospho-alpha-D-ribose 1-diphosphate: step 3/9. Its function is as follows. Catalyzes the hydrolysis of the adenine ring of phosphoribosyl-AMP. This chain is Phosphoribosyl-AMP cyclohydrolase, found in Geotalea uraniireducens (strain Rf4) (Geobacter uraniireducens).